A 411-amino-acid polypeptide reads, in one-letter code: NAD-dependent dihydropyrimidine dehydrogenase subunit PreA (411 aa).

Residues Asn76 and 134-136 (NFS) each bind substrate. Cys137 functions as the Nucleophile in the catalytic mechanism. Residue 201 to 202 (NT) participates in substrate binding. 4Fe-4S ferredoxin-type domains lie at 335-367 (VYPR…WSEK) and 369-398 (RTPH…LGEV). [4Fe-4S] cluster is bound by residues Cys344, Cys347, Cys350, Cys354, Cys378, Cys381, Cys384, and Cys388.

This sequence belongs to the dihydropyrimidine dehydrogenase family. Heterotetramer of 2 PreA and 2 PreT subunits. [4Fe-4S] cluster is required as a cofactor.

It carries out the reaction 5,6-dihydrouracil + NAD(+) = uracil + NADH + H(+). The catalysed reaction is 5,6-dihydrothymine + NAD(+) = thymine + NADH + H(+). Involved in pyrimidine base degradation. Catalyzes physiologically the reduction of uracil to 5,6-dihydrouracil (DHU) by using NADH as a specific cosubstrate. It also catalyzes the reverse reaction and the reduction of thymine to 5,6-dihydrothymine (DHT). The polypeptide is NAD-dependent dihydropyrimidine dehydrogenase subunit PreA (preA) (Escherichia coli O157:H7).